Here is a 592-residue protein sequence, read N- to C-terminus: Guanylate-binding protein 1 (592 aa).

The tract at residues 1-311 (MASEIHMTGP…NAISSGDLPC (311 aa)) is GTPase domain (Globular). One can recognise a GB1/RHD3-type G domain in the interval 35 to 278 (TQPMVVVAIV…FCSYIFSNSK (244 aa)). Residues 45 to 52 (GLYRTGKS), 67 to 69 (LGS), and 97 to 101 (DTEGL) contribute to the GTP site. Phosphoserine is present on S156. At C589 the chain carries Cysteine methyl ester. C589 carries the S-farnesyl cysteine lipid modification. T590 bears the Phosphothreonine mark. A propeptide spans 590-592 (TIS) (removed in mature form).

The protein belongs to the TRAFAC class dynamin-like GTPase superfamily. GB1/RHD3 GTPase family. GB1 subfamily. As to quaternary structure, homodimer; homodimerization occurs upon GTP-binding and is required for the second hydrolysis step from GDP to GMP. Undergoes conformational changes and oligomerization upon GTP-binding and hydrolysis. Heterodimer with other family members, including GBP2, GBP3, GBP4 and GBP5. Dimerization regulates subcellular location to membranous structures. Interacts with SQSTM1. Interacts (when phosphorylated) with 14-3-3 protein sigma (SFN); leading to GBP1 retention in the cytosol and inactivation. Isoprenylation is required for proper subcellular location. Post-translationally, phosphorylated at Ser-156 by PIM1 in absence of infection, inhibits GBP1: phosphorylation promotes interaction with 14-3-3 protein sigma (SFN), leading to GBP1 retention in the cytosol. Dephosphorylated in response to infection, liberating GBP1.

It is found in the cytoplasmic vesicle membrane. It localises to the golgi apparatus membrane. The protein resides in the cell membrane. Its subcellular location is the cytoplasm. The protein localises to the cytosol. It is found in the secreted. It catalyses the reaction GTP + H2O = GDP + phosphate + H(+). The enzyme catalyses GDP + H2O = GMP + phosphate + H(+). Interferon (IFN)-inducible GTPase that plays important roles in innate immunity against a diverse range of bacterial, viral and protozoan pathogens. Hydrolyzes GTP to GMP in two consecutive cleavage reactions: GTP is first hydrolyzed to GDP and then to GMP in a processive manner. Following infection, recruited to the pathogen-containing vacuoles or vacuole-escaped bacteria and promotes both inflammasome assembly and autophagy. Acts as a positive regulator of inflammasome assembly by facilitating the detection of inflammasome ligands from pathogens. Involved in the lysis of pathogen-containing vacuoles, releasing pathogens into the cytosol. Following pathogen release in the cytosol, forms a protein coat in a GTPase-dependent manner that encapsulates pathogens and promotes the detection of ligands by pattern recognition receptors. Plays a key role in inflammasome assembly in response to infection by Gram-negative bacteria: following pathogen release in the cytosol, forms a protein coat that encapsulates Gram-negative bacteria and directly binds to lipopolysaccharide (LPS), disrupting the O-antigen barrier and unmasking lipid A that is that detected by the non-canonical inflammasome effector CASP4/CASP11. Also promotes recruitment of proteins that mediate bacterial cytolysis, leading to release double-stranded DNA (dsDNA) that activates the AIM2 inflammasome. Involved in autophagy by regulating bacteriolytic peptide generation via its interaction with ubiquitin-binding protein SQSTM1, which delivers monoubiquitinated proteins to autolysosomes for the generation of bacteriolytic peptides. Confers protection to several pathogens, including the bacterial pathogens L.monocytogenes and M.bovis BCG as well as the protozoan pathogen T.gondii. Exhibits antiviral activity against influenza virus. This Pongo abelii (Sumatran orangutan) protein is Guanylate-binding protein 1 (GBP1).